Here is an 82-residue protein sequence, read N- to C-terminus: UPF0180 protein BAA_1480 (82 aa).

It belongs to the UPF0180 family.

In Bacillus anthracis (strain A0248), this protein is UPF0180 protein BAA_1480.